The primary structure comprises 433 residues: Probable D-serine dehydratase (433 aa).

Lys-110 is subject to N6-(pyridoxal phosphate)lysine.

This sequence belongs to the serine/threonine dehydratase family. DsdA subfamily. The cofactor is pyridoxal 5'-phosphate.

The enzyme catalyses D-serine = pyruvate + NH4(+). This Oenococcus oeni (strain ATCC BAA-331 / PSU-1) protein is Probable D-serine dehydratase.